The primary structure comprises 49 residues: Large ribosomal subunit protein bL33 (49 aa).

The protein belongs to the bacterial ribosomal protein bL33 family.

This chain is Large ribosomal subunit protein bL33, found in Lactiplantibacillus plantarum (strain ATCC BAA-793 / NCIMB 8826 / WCFS1) (Lactobacillus plantarum).